The primary structure comprises 328 residues: Malate dehydrogenase (328 aa).

11–17 (GAAGQIG) contributes to the NAD(+) binding site. Residues R94 and R100 each coordinate substrate. NAD(+) is bound by residues N107, Q114, and 131–133 (VGN). Residues N133 and R164 each coordinate substrate. The active-site Proton acceptor is the H189.

This sequence belongs to the LDH/MDH superfamily. MDH type 2 family.

The enzyme catalyses (S)-malate + NAD(+) = oxaloacetate + NADH + H(+). Its function is as follows. Catalyzes the reversible oxidation of malate to oxaloacetate. The sequence is that of Malate dehydrogenase from Xanthomonas oryzae pv. oryzae (strain MAFF 311018).